The sequence spans 485 residues: Inosine-5'-monophosphate dehydrogenase (485 aa).

CBS domains are found at residues 99-154 (IVED…TVKE) and 156-212 (MTRE…KNAV). Residues D247 and 294–296 (GIG) each bind NAD(+). K(+) is bound by residues G296 and G298. Residue S299 participates in IMP binding. C301 lines the K(+) pocket. C301 functions as the Thioimidate intermediate in the catalytic mechanism. Residues 334–336 (DGG), 357–358 (GN), and 381–385 (YRGMG) each bind IMP. Residue R397 is the Proton acceptor of the active site. IMP is bound at residue E412. K(+)-binding residues include E466, S467, and H468.

This sequence belongs to the IMPDH/GMPR family. As to quaternary structure, homotetramer. K(+) serves as cofactor.

It catalyses the reaction IMP + NAD(+) + H2O = XMP + NADH + H(+). It functions in the pathway purine metabolism; XMP biosynthesis via de novo pathway; XMP from IMP: step 1/1. With respect to regulation, mycophenolic acid (MPA) is a non-competitive inhibitor that prevents formation of the closed enzyme conformation by binding to the same site as the amobile flap. In contrast, mizoribine monophosphate (MZP) is a competitive inhibitor that induces the closed conformation. MPA is a potent inhibitor of mammalian IMPDHs but a poor inhibitor of the bacterial enzymes. MZP is a more potent inhibitor of bacterial IMPDH. Its function is as follows. Catalyzes the conversion of inosine 5'-phosphate (IMP) to xanthosine 5'-phosphate (XMP), the first committed and rate-limiting step in the de novo synthesis of guanine nucleotides, and therefore plays an important role in the regulation of cell growth. The chain is Inosine-5'-monophosphate dehydrogenase from Pyrococcus furiosus (strain ATCC 43587 / DSM 3638 / JCM 8422 / Vc1).